We begin with the raw amino-acid sequence, 131 residues long: D-ribose pyranase (131 aa).

The active-site Proton donor is histidine 20. Residues aspartate 28, histidine 98, and tyrosine 120 to asparagine 122 contribute to the substrate site.

The protein belongs to the RbsD / FucU family. RbsD subfamily. Homodecamer.

The protein localises to the cytoplasm. The enzyme catalyses beta-D-ribopyranose = beta-D-ribofuranose. The protein operates within carbohydrate metabolism; D-ribose degradation; D-ribose 5-phosphate from beta-D-ribopyranose: step 1/2. Catalyzes the interconversion of beta-pyran and beta-furan forms of D-ribose. The sequence is that of D-ribose pyranase from Chloroflexus aggregans (strain MD-66 / DSM 9485).